The primary structure comprises 622 residues: MRKLYCVLLLSAFEFTYMINFGRGQNYWEHPYQKSDVYHPINEHREHPKEYQYPLHQEHTYQQEDSGEDENTLQHAYPIDHEGAEPAPQEQNLFSSIEIVERSNYMGNPWTEYMAKYDIEEVHGSGIRVDLGEDAEVAGTQYRLPSGKCPVFGKGIIIENSNTTFLTPVATGNQYLKDGGFAFPPTEPLMSPMTLDEMRHFYKDNKYVKNLDELTLCSRHAGNMIPDNDKNSNYKYPAVYDDKDKKCHILYIAAQENNGPRYCNKDESKRNSMFCFRPAKDISFQNYTYLSKNVVDNWEKVCPRKNLQNAKFGLWVDGNCEDIPHVNEFSAIDLFECNKLVFELSASDQPKQYEQHLTDYEKIKEGFKNKNASMIKSAFLPTGAFKADRYKSHGKGYNWGNYNTETQKCEIFNVKPTCLINNSSYIATTALSHPIEVEHNFPCSLYKNEIMKEIERESKRIKLNDNDDEGNKKIIAPRIFISDDKDSLKCPCDPEIVSNSTCNFFVCKCVERRAEVTSNNEVVVKEEYKDEYADIPEHKPTYDKMKIIIASSAAVAVLATILMVYLYKRKGNAEKYDKMDEPQHYGKSNSRNDEMLDPEASFWGEEKRASHTTPVLMEKPYY.

A signal peptide spans 1-24; sequence MRKLYCVLLLSAFEFTYMINFGRG. Residues 25–546 are Extracellular-facing; that stretch reads QNYWEHPYQK…EHKPTYDKMK (522 aa). Disulfide bonds link Cys-149/Cys-302, Cys-217/Cys-247, Cys-263/Cys-275, Cys-320/Cys-418, and Cys-337/Cys-409. An N-linked (GlcNAc...) asparagine glycan is attached at Asn-162. N-linked (GlcNAc...) asparagine glycosylation is found at Asn-286, Asn-371, Asn-421, Asn-422, and Asn-499. Disulfide bonds link Cys-443–Cys-502, Cys-490–Cys-507, and Cys-492–Cys-509. The chain crosses the membrane as a helical span at residues 547-567; it reads IIIASSAAVAVLATILMVYLY. At 568–622 the chain is on the cytoplasmic side; that stretch reads KRKGNAEKYDKMDEPQHYGKSNSRNDEMLDPEASFWGEEKRASHTTPVLMEKPYY. Positions 578–594 are enriched in basic and acidic residues; sequence KMDEPQHYGKSNSRNDE. Residues 578 to 607 are disordered; that stretch reads KMDEPQHYGKSNSRNDEMLDPEASFWGEEK.

It belongs to the apicomplexan parasites AMA1 family.

Its subcellular location is the membrane. Involved in parasite invasion of erythrocytes. This Plasmodium falciparum (isolate FC27 / Papua New Guinea) protein is Apical membrane antigen 1 (AMA-1).